The chain runs to 609 residues: MGESERSEAFNPPREAGMSSGDIAELEQLRREIVVLREQLEHAVGPHGSVRSVRDVHQLEARIDSLTARNSKLMDTLKEARQQLLALREEVDRLGQPPSGYGVLLAAHDDETVDVFTSGRKMRLTCSPNIEVASLRKGQTVRLNEALTVVEAGTFEAVGEVSTLREVLADGHRALVVGHADEERIVCLAEPLVAENLLDGVPGALNDDSRPRKLRPGDSLLVDPKAGYAFERVPKAEVEDLVLEEVPDVSYQDIGGLTRQIEQIRDAVELPFLHKELYREYALRPPKGVLLYGPPGCGKTLIAKAVANSLAKKMAEVRGDDAREAKSYFLNIKGPELLNKFVGETERHIRLIFQRAREKASEGTPVIVFFDEMDSIFRTRGTGVSSDVETTVVPQLLSEIDGVEGLENVIVIGASNREDMIDPAILRPGRLDVKIKIERPDAEAAQDIYSKYLTESLPVHADDLTEFDGDRAACIKAMIEKVVDRMYAEIDDNRFLEVTYANGDKEVMYFKDFNSGAMIQNVVDRAKKNAIKSVLETGQPGLRIQHLLDSIVDEFAENEDLPNTTNPDDWARISGKKGERIVYIRTLVTGKSSSASRAIDTESNLGQYL.

The segment at 1–22 (MGESERSEAFNPPREAGMSSGD) is disordered. Residues 20-96 (SGDIAELEQL…LREEVDRLGQ (77 aa)) adopt a coiled-coil conformation. 296–301 (GCGKTL) lines the ATP pocket. The tract at residues 608 to 609 (YL) is docks into pockets in the proteasome alpha-ring.

This sequence belongs to the AAA ATPase family. As to quaternary structure, homohexamer. Assembles into a hexameric ring structure that caps the 20S proteasome core. Strongly interacts with the prokaryotic ubiquitin-like protein Pup through a hydrophobic interface; the interacting region of ARC lies in its N-terminal coiled-coil domain. There is one Pup binding site per ARC hexamer ring. Upon ATP-binding, the C-terminus of ARC interacts with the alpha-rings of the proteasome core, possibly by binding to the intersubunit pockets.

Its pathway is protein degradation; proteasomal Pup-dependent pathway. Its function is as follows. ATPase which is responsible for recognizing, binding, unfolding and translocation of pupylated proteins into the bacterial 20S proteasome core particle. May be essential for opening the gate of the 20S proteasome via an interaction with its C-terminus, thereby allowing substrate entry and access to the site of proteolysis. Thus, the C-termini of the proteasomal ATPase may function like a 'key in a lock' to induce gate opening and therefore regulate proteolysis. In Mycobacterium leprae (strain Br4923), this protein is Proteasome-associated ATPase.